Consider the following 185-residue polypeptide: Elongation factor P (185 aa).

This sequence belongs to the elongation factor P family.

The protein resides in the cytoplasm. It functions in the pathway protein biosynthesis; polypeptide chain elongation. In terms of biological role, involved in peptide bond synthesis. Stimulates efficient translation and peptide-bond synthesis on native or reconstituted 70S ribosomes in vitro. Probably functions indirectly by altering the affinity of the ribosome for aminoacyl-tRNA, thus increasing their reactivity as acceptors for peptidyl transferase. This is Elongation factor P from Picosynechococcus sp. (strain ATCC 27264 / PCC 7002 / PR-6) (Agmenellum quadruplicatum).